A 479-amino-acid chain; its full sequence is Aspartyl/glutamyl-tRNA(Asn/Gln) amidotransferase subunit B (479 aa).

This sequence belongs to the GatB/GatE family. GatB subfamily. Heterotrimer of A, B and C subunits.

It catalyses the reaction L-glutamyl-tRNA(Gln) + L-glutamine + ATP + H2O = L-glutaminyl-tRNA(Gln) + L-glutamate + ADP + phosphate + H(+). It carries out the reaction L-aspartyl-tRNA(Asn) + L-glutamine + ATP + H2O = L-asparaginyl-tRNA(Asn) + L-glutamate + ADP + phosphate + 2 H(+). Allows the formation of correctly charged Asn-tRNA(Asn) or Gln-tRNA(Gln) through the transamidation of misacylated Asp-tRNA(Asn) or Glu-tRNA(Gln) in organisms which lack either or both of asparaginyl-tRNA or glutaminyl-tRNA synthetases. The reaction takes place in the presence of glutamine and ATP through an activated phospho-Asp-tRNA(Asn) or phospho-Glu-tRNA(Gln). The protein is Aspartyl/glutamyl-tRNA(Asn/Gln) amidotransferase subunit B of Streptococcus mutans serotype c (strain ATCC 700610 / UA159).